The following is a 940-amino-acid chain: Alanine--tRNA ligase (940 aa).

Positions 581, 585, 683, and 687 each coordinate Zn(2+).

Belongs to the class-II aminoacyl-tRNA synthetase family. The cofactor is Zn(2+).

The protein resides in the cytoplasm. It carries out the reaction tRNA(Ala) + L-alanine + ATP = L-alanyl-tRNA(Ala) + AMP + diphosphate. In terms of biological role, catalyzes the attachment of alanine to tRNA(Ala) in a two-step reaction: alanine is first activated by ATP to form Ala-AMP and then transferred to the acceptor end of tRNA(Ala). Also edits incorrectly charged Ser-tRNA(Ala) and Gly-tRNA(Ala) via its editing domain. The protein is Alanine--tRNA ligase of Leptospira borgpetersenii serovar Hardjo-bovis (strain L550).